Here is a 427-residue protein sequence, read N- to C-terminus: Putative B3 domain-containing protein Os04g0346900 (427 aa).

2 consecutive DNA-binding regions (TF-B3) follow at residues 25–118 and 140–236; these read LVPS…FDTT and KPQF…FGPN. The disordered stretch occupies residues 253–309; the sequence is TGEQQEAPSFSRRKCNNKKKSRFGEDDGNQQEMPCSRKGSGNKGRTSDRETKRMRKT. Residues 263-273 are compositionally biased toward basic residues; sequence SRRKCNNKKKS. The TF-B3 3 DNA-binding region spans 320–427; it reads WIKKEINEYV…TLWRVDIERC (108 aa).

The protein localises to the nucleus. The chain is Putative B3 domain-containing protein Os04g0346900 from Oryza sativa subsp. japonica (Rice).